Reading from the N-terminus, the 276-residue chain is Phosphatidylcholine synthase (276 aa).

Residues 1–30 (MGGQKEMADSVKTKLTGKLKAKKVTAPQAK) are Cytoplasmic-facing. Residues 31–51 (AFSVHLLTASGSFLAFLSVVA) traverse the membrane as a helical segment. Residues 52 to 57 (ASDGRY) lie on the Periplasmic side of the membrane. The helical transmembrane segment at 58 to 78 (TAMWWWLGLALFVDGIDGPIA) threads the bilayer. Residues 79–91 (RKLEVKYVLPNWS) are Cytoplasmic-facing. A helical transmembrane segment spans residues 92–112 (GELLDSIIDYVTYVLIPAFAL). The Periplasmic portion of the chain corresponds to 113-115 (YQS). Residues 116–136 (GFMGTNLSFISGAIIVVSSAI) traverse the membrane as a helical segment. Residues 137 to 146 (YYADTGMKTK) lie on the Cytoplasmic side of the membrane. Residues 147 to 167 (ENFFKGFPVVWNMVVFTLFIV) form a helical membrane-spanning segment. At 168 to 171 (RPGE) the chain is on the periplasmic side. A helical transmembrane segment spans residues 172 to 192 (WVAFGTVVASAILSFLPINFL). At 193 to 202 (HPVRVVRLRP) the chain is on the cytoplasmic side. Residues 203-223 (LNLTIFLLWCAFGVIALYYML) traverse the membrane as a helical segment. The Periplasmic portion of the chain corresponds to 224-230 (DAPLWVR). Residues 231–251 (IGISVTGLYIYFIGAIMQLFP) traverse the membrane as a helical segment. Topologically, residues 252-276 (SLGREAALAKARKLVEKQQKSGEAP) are cytoplasmic.

It belongs to the CDP-alcohol phosphatidyltransferase class-I family. It depends on Mn(2+) as a cofactor.

The protein resides in the cell inner membrane. The enzyme catalyses a CDP-1,2-diacyl-sn-glycerol + choline = a 1,2-diacyl-sn-glycero-3-phosphocholine + CMP + H(+). Its function is as follows. Condenses choline with CDP-diglyceride to produce phosphatidylcholine and CMP. The sequence is that of Phosphatidylcholine synthase from Brucella melitensis biotype 1 (strain ATCC 23456 / CCUG 17765 / NCTC 10094 / 16M).